Reading from the N-terminus, the 1414-residue chain is Protein KATNIP homolog (1414 aa).

Disordered regions lie at residues 1–32 (MHGKSLGSSRKNDSRSKIRQEKESNIDFDEKH), 80–116 (QQSTQDLARESSKSSKIPDDGCSHLPGRRSQTAPGKI), 139–158 (GPNTKYSEDFESDDDMNEDQ), 712–731 (VSATSSKEPPPCPRDDNDLT), 756–783 (SSSSNFQQKSHNQPTKNHLNASSSTFTN), 823–861 (KMDNEDDLENFSNQSSYNSDRPVSGRRKTVQMQDKSEKY), and 924–943 (QQQKAGKQSDSTKNGSSLMP). Basic and acidic residues-rich tracts occupy residues 10–32 (RKNDSRSKIRQEKESNIDFDEKH) and 86–101 (LARESSKSSKIPDDGC). A compositionally biased stretch (acidic residues) spans 147 to 158 (DFESDDDMNEDQ). Polar residues-rich tracts occupy residues 832–843 (NFSNQSSYNSDR) and 924–940 (QQQKAGKQSDSTKNGSS).

It is found in the cytoplasm. It localises to the cytoskeleton. Its subcellular location is the cilium axoneme. The protein localises to the cilium basal body. Functionally, may control cilium integrity. The sequence is that of Protein KATNIP homolog from Xenopus laevis (African clawed frog).